We begin with the raw amino-acid sequence, 217 residues long: Uracil-DNA glycosylase (217 aa).

Asp-62 functions as the Proton acceptor in the catalytic mechanism.

The protein belongs to the uracil-DNA glycosylase (UDG) superfamily. UNG family.

The protein resides in the cytoplasm. It carries out the reaction Hydrolyzes single-stranded DNA or mismatched double-stranded DNA and polynucleotides, releasing free uracil.. Functionally, excises uracil residues from the DNA which can arise as a result of misincorporation of dUMP residues by DNA polymerase or due to deamination of cytosine. The chain is Uracil-DNA glycosylase from Streptococcus sanguinis (strain SK36).